Here is a 446-residue protein sequence, read N- to C-terminus: tRNA-2-methylthio-N(6)-dimethylallyladenosine synthase (446 aa).

The MTTase N-terminal domain occupies 3–119; sequence KKIFIKTFGC…INEAILNHLK (117 aa). Residues cysteine 12, cysteine 48, cysteine 82, cysteine 158, cysteine 162, and cysteine 165 each contribute to the [4Fe-4S] cluster site. Residues 144 to 374 enclose the Radical SAM core domain; sequence KDSKVSSFLT…QEKLFNNQIK (231 aa). The region spanning 377 to 439 is the TRAM domain; that stretch reads KSLENKILNV…QNSLFGKLTE (63 aa).

It belongs to the methylthiotransferase family. MiaB subfamily. Monomer. The cofactor is [4Fe-4S] cluster.

The protein resides in the cytoplasm. The catalysed reaction is N(6)-dimethylallyladenosine(37) in tRNA + (sulfur carrier)-SH + AH2 + 2 S-adenosyl-L-methionine = 2-methylsulfanyl-N(6)-dimethylallyladenosine(37) in tRNA + (sulfur carrier)-H + 5'-deoxyadenosine + L-methionine + A + S-adenosyl-L-homocysteine + 2 H(+). In terms of biological role, catalyzes the methylthiolation of N6-(dimethylallyl)adenosine (i(6)A), leading to the formation of 2-methylthio-N6-(dimethylallyl)adenosine (ms(2)i(6)A) at position 37 in tRNAs that read codons beginning with uridine. This Pelagibacter ubique (strain HTCC1062) protein is tRNA-2-methylthio-N(6)-dimethylallyladenosine synthase.